We begin with the raw amino-acid sequence, 324 residues long: Serine racemase (324 aa).

3 residues coordinate ATP: Ser32, Lys51, and Thr52. Lys56 functions as the Proton acceptor in the catalytic mechanism. N6-(pyridoxal phosphate)lysine is present on Lys56. Residue Thr78 participates in Ca(2+) binding. Ser81 functions as the Proton acceptor in the catalytic mechanism. Pyridoxal 5'-phosphate is bound at residue Asn83. ATP-binding residues include Gln86 and Tyr118. Asp175 serves as a coordination point for Mg(2+). Pyridoxal 5'-phosphate contacts are provided by Gly182, Gly183, Gly184, and Gly185. Ca(2+) contacts are provided by Glu207, Ala211, and Asp213. Positions 207, 211, and 213 each coordinate Mg(2+). Positions 207, 211, and 213 each coordinate Mn(2+). Residue Lys277 coordinates ATP. Position 310 (Ser310) interacts with pyridoxal 5'-phosphate. Residue Asn313 participates in ATP binding.

It belongs to the serine/threonine dehydratase family. Homodimer. The cofactor is Mg(2+). It depends on Mn(2+) as a cofactor. Ca(2+) is required as a cofactor. Pyridoxal 5'-phosphate serves as cofactor.

The catalysed reaction is L-serine = D-serine. The enzyme catalyses L-serine = pyruvate + NH4(+). It catalyses the reaction D-serine = pyruvate + NH4(+). In terms of biological role, catalyzes the synthesis of D-serine from L-serine. Has dehydratase activity towards both L-serine and D-serine. This chain is Serine racemase (srr), found in Dictyostelium discoideum (Social amoeba).